The following is a 67-amino-acid chain: Large ribosomal subunit protein uL30 (67 aa).

It belongs to the universal ribosomal protein uL30 family. As to quaternary structure, part of the 50S ribosomal subunit.

In Hamiltonella defensa subsp. Acyrthosiphon pisum (strain 5AT), this protein is Large ribosomal subunit protein uL30.